A 351-amino-acid polypeptide reads, in one-letter code: Phospho-N-acetylmuramoyl-pentapeptide-transferase (351 aa).

Helical transmembrane passes span 17-37, 62-82, 85-105, 130-150, 158-178, 190-210, 230-250, 254-274, 279-299, and 328-348; these read MAYA…YIIL, GIPT…LVFW, ILNV…FLGF, IIFS…HVSV, SFQI…LISA, GLAI…AYLT, LVIF…FNAY, IMMG…AALI, ILFS…IIQV, and QVVI…LSTI.

Belongs to the glycosyltransferase 4 family. MraY subfamily. Mg(2+) serves as cofactor.

The protein localises to the cell inner membrane. The enzyme catalyses UDP-N-acetyl-alpha-D-muramoyl-L-alanyl-gamma-D-glutamyl-meso-2,6-diaminopimeloyl-D-alanyl-D-alanine + di-trans,octa-cis-undecaprenyl phosphate = di-trans,octa-cis-undecaprenyl diphospho-N-acetyl-alpha-D-muramoyl-L-alanyl-D-glutamyl-meso-2,6-diaminopimeloyl-D-alanyl-D-alanine + UMP. The protein operates within cell wall biogenesis; peptidoglycan biosynthesis. Catalyzes the initial step of the lipid cycle reactions in the biosynthesis of the cell wall peptidoglycan: transfers peptidoglycan precursor phospho-MurNAc-pentapeptide from UDP-MurNAc-pentapeptide onto the lipid carrier undecaprenyl phosphate, yielding undecaprenyl-pyrophosphoryl-MurNAc-pentapeptide, known as lipid I. This is Phospho-N-acetylmuramoyl-pentapeptide-transferase from Borreliella burgdorferi (strain ATCC 35210 / DSM 4680 / CIP 102532 / B31) (Borrelia burgdorferi).